The following is a 279-amino-acid chain: Large ribosomal subunit protein uL2 (279 aa).

2 disordered regions span residues 29-49 (PVKQLTEGKSSSGGRNNNGRV) and 202-279 (NASI…KKKG). Low complexity predominate over residues 36–49 (GKSSSGGRNNNGRV). The span at 209–220 (GRSRWLGRRPHN) shows a compositional bias: basic residues.

This sequence belongs to the universal ribosomal protein uL2 family. As to quaternary structure, part of the 50S ribosomal subunit. Forms a bridge to the 30S subunit in the 70S ribosome.

One of the primary rRNA binding proteins. Required for association of the 30S and 50S subunits to form the 70S ribosome, for tRNA binding and peptide bond formation. It has been suggested to have peptidyltransferase activity; this is somewhat controversial. Makes several contacts with the 16S rRNA in the 70S ribosome. The chain is Large ribosomal subunit protein uL2 from Beijerinckia indica subsp. indica (strain ATCC 9039 / DSM 1715 / NCIMB 8712).